A 193-amino-acid polypeptide reads, in one-letter code: Putative F-box protein At1g31072 (193 aa).

The F-box domain maps to 4 to 53 (EKTLDSIPIDVFLDIFSRLPAKSVGRSCCVSNRWASILGSQDFKELFLTM).

In Arabidopsis thaliana (Mouse-ear cress), this protein is Putative F-box protein At1g31072.